We begin with the raw amino-acid sequence, 163 residues long: RRM-domain-containing protein ECU01_0840 (163 aa).

One can recognise an RRM domain in the interval 84–163 (CSVKLSNLPL…SLGLSAEIAR (80 aa)).

This Encephalitozoon cuniculi (strain GB-M1) (Microsporidian parasite) protein is RRM-domain-containing protein ECU01_0840.